We begin with the raw amino-acid sequence, 460 residues long: ATP synthase subunit beta (460 aa).

149-156 contributes to the ATP binding site; it reads GGAGVGKT.

This sequence belongs to the ATPase alpha/beta chains family. In terms of assembly, F-type ATPases have 2 components, CF(1) - the catalytic core - and CF(0) - the membrane proton channel. CF(1) has five subunits: alpha(3), beta(3), gamma(1), delta(1), epsilon(1). CF(0) has three main subunits: a(1), b(2) and c(9-12). The alpha and beta chains form an alternating ring which encloses part of the gamma chain. CF(1) is attached to CF(0) by a central stalk formed by the gamma and epsilon chains, while a peripheral stalk is formed by the delta and b chains.

The protein localises to the cell membrane. The enzyme catalyses ATP + H2O + 4 H(+)(in) = ADP + phosphate + 5 H(+)(out). Produces ATP from ADP in the presence of a proton gradient across the membrane. The catalytic sites are hosted primarily by the beta subunits. This chain is ATP synthase subunit beta, found in Acholeplasma laidlawii (strain PG-8A).